Reading from the N-terminus, the 337-residue chain is MRLTASAIAEQFGLTVVGDGTTEVSGVATLAHAGAGQLSFLSNPRYRPQLADTQAAVVVLRADDAEAAKGTALVAKDPYTAFAKIAALFDLAPVREPGIHASAVIDPTAQVSATAHVGPFVSIGARSRVGDGCVIGTGSIIGEDCVVDAGSELLARVTLVTRVRLGKRVRIHPGAVIGADGFGLAMDAGHWIKVPQLGGVVIGDDCEIGANTCIDRGALEDTVLEEDVRVDNLVQIAHNCRIGAHSAIAGCTGIAGSAKIGRYCLLGGHVGVVGHLEICDKVVITGKSVVRNSIHEPGEYSSGTPLTDNRTWRKNAARFKQLDVLARRILAVGKEKE.

His238 functions as the Proton acceptor in the catalytic mechanism.

The protein belongs to the transferase hexapeptide repeat family. LpxD subfamily. As to quaternary structure, homotrimer.

The enzyme catalyses a UDP-3-O-[(3R)-3-hydroxyacyl]-alpha-D-glucosamine + a (3R)-hydroxyacyl-[ACP] = a UDP-2-N,3-O-bis[(3R)-3-hydroxyacyl]-alpha-D-glucosamine + holo-[ACP] + H(+). Its pathway is bacterial outer membrane biogenesis; LPS lipid A biosynthesis. In terms of biological role, catalyzes the N-acylation of UDP-3-O-acylglucosamine using 3-hydroxyacyl-ACP as the acyl donor. Is involved in the biosynthesis of lipid A, a phosphorylated glycolipid that anchors the lipopolysaccharide to the outer membrane of the cell. The polypeptide is UDP-3-O-acylglucosamine N-acyltransferase (Xanthomonas axonopodis pv. citri (strain 306)).